Consider the following 258-residue polypeptide: 4-hydroxy-tetrahydrodipicolinate reductase (258 aa).

10 to 15 (GCLGRM) contributes to the NAD(+) binding site. Residue Lys38 participates in NADP(+) binding. Residues 89–91 (GTT) and 113–116 (AGNM) each bind NAD(+). Catalysis depends on His146, which acts as the Proton donor/acceptor. Residue His147 coordinates (S)-2,3,4,5-tetrahydrodipicolinate. The Proton donor role is filled by Lys150. Residue 156–157 (GT) coordinates (S)-2,3,4,5-tetrahydrodipicolinate.

Belongs to the DapB family.

The protein localises to the cytoplasm. The catalysed reaction is (S)-2,3,4,5-tetrahydrodipicolinate + NAD(+) + H2O = (2S,4S)-4-hydroxy-2,3,4,5-tetrahydrodipicolinate + NADH + H(+). It carries out the reaction (S)-2,3,4,5-tetrahydrodipicolinate + NADP(+) + H2O = (2S,4S)-4-hydroxy-2,3,4,5-tetrahydrodipicolinate + NADPH + H(+). Its pathway is amino-acid biosynthesis; L-lysine biosynthesis via DAP pathway; (S)-tetrahydrodipicolinate from L-aspartate: step 4/4. In terms of biological role, catalyzes the conversion of 4-hydroxy-tetrahydrodipicolinate (HTPA) to tetrahydrodipicolinate. The sequence is that of 4-hydroxy-tetrahydrodipicolinate reductase from Pelagibacter ubique (strain HTCC1062).